An 82-amino-acid chain; its full sequence is Endocuticle structural glycoprotein ABD-5 (82 aa).

The residue at position 1 (Gln1) is a Pyrrolidone carboxylic acid. Positions 18–82 (LGQYNFAYRT…ENGYQPRVQS (65 aa)) constitute a Chitin-binding type R&amp;R domain.

In terms of biological role, component of the soft endocuticle of migratory locust. This Locusta migratoria (Migratory locust) protein is Endocuticle structural glycoprotein ABD-5.